The following is a 155-amino-acid chain: HTH-type transcriptional repressor MdtR (155 aa).

The 137-residue stretch at 4–140 folds into the HTH marR-type domain; sequence ADQLMSDIQL…AAHITAKLAQ (137 aa). Positions 54-77 form a DNA-binding region, H-T-H motif; the sequence is VSEIAERMEVKPSAVTLMADRLEQ.

Homodimer.

It is found in the cytoplasm. The binding of MdtR to the mdtRP promoter region is severely inhibited by adding excess concentrations of fusidic acid or novobiocin but not by actinomycin or streptomycin. Repressor of the multidrug resistance operon mdtRP. Acts by binding directly to the mdtRP promoter region, leading to the repression of its expression. In Bacillus subtilis (strain 168), this protein is HTH-type transcriptional repressor MdtR.